Reading from the N-terminus, the 265-residue chain is Taurine import ATP-binding protein TauB (265 aa).

The region spanning 7–236 (QNLNMIFKTP…MGIDGDLREI (230 aa)) is the ABC transporter domain. ATP is bound at residue 41–48 (GPSGCGKT).

The protein belongs to the ABC transporter superfamily. Taurine importer (TC 3.A.1.17.1) family. As to quaternary structure, the complex is composed of two ATP-binding proteins (TauB), two transmembrane proteins (TauC) and a solute-binding protein (TauA).

The protein localises to the cell inner membrane. The enzyme catalyses taurine(out) + ATP + H2O = taurine(in) + ADP + phosphate + H(+). Part of the ABC transporter complex TauABC involved in taurine import. Responsible for energy coupling to the transport system. This is Taurine import ATP-binding protein TauB from Pelagibacter ubique (strain HTCC1062).